We begin with the raw amino-acid sequence, 568 residues long: O-fucosyltransferase 9 (568 aa).

Residues Met-1 to Pro-19 are compositionally biased toward low complexity. The tract at residues Met-1–Arg-33 is disordered. The chain crosses the membrane as a helical; Signal-anchor for type II membrane protein span at residues Leu-65–Phe-85. 4 N-linked (GlcNAc...) asparagine glycosylation sites follow: Asn-125, Asn-151, Asn-189, and Asn-243. His-336–Arg-338 contacts substrate. 2 N-linked (GlcNAc...) asparagine glycosylation sites follow: Asn-408 and Asn-409.

It belongs to the glycosyltransferase GT106 family.

Its subcellular location is the membrane. It functions in the pathway glycan metabolism. In Arabidopsis thaliana (Mouse-ear cress), this protein is O-fucosyltransferase 9.